The primary structure comprises 100 residues: Large ribosomal subunit protein uL23 (100 aa).

Belongs to the universal ribosomal protein uL23 family. Part of the 50S ribosomal subunit. Contacts protein L29, and trigger factor when it is bound to the ribosome.

In terms of biological role, one of the early assembly proteins it binds 23S rRNA. One of the proteins that surrounds the polypeptide exit tunnel on the outside of the ribosome. Forms the main docking site for trigger factor binding to the ribosome. The sequence is that of Large ribosomal subunit protein uL23 from Sodalis glossinidius (strain morsitans).